A 236-amino-acid chain; its full sequence is uncharacterized protein (236 aa).

The segment at 1–29 (MNNEKNKQDRENLNRQDERKSSEIKSERK) is disordered.

This is an uncharacterized protein from Staphylococcus aureus.